The following is a 425-amino-acid chain: Elongation factor 1-alpha (425 aa).

Residues Lys5 to Thr221 enclose the tr-type G domain. Residues Gly14 to Ser21 are G1. Gly14 to Ser21 contacts GTP. Position 21 (Ser21) interacts with Mg(2+). Residues Gly70–Asp74 are G2. The tract at residues Asp91–Gly94 is G3. GTP contacts are provided by residues Asp91–His95 and Asn146–Asp149. The tract at residues Asn146 to Asp149 is G4. The tract at residues Ser185–Phe187 is G5.

The protein belongs to the TRAFAC class translation factor GTPase superfamily. Classic translation factor GTPase family. EF-Tu/EF-1A subfamily.

The protein localises to the cytoplasm. The enzyme catalyses GTP + H2O = GDP + phosphate + H(+). In terms of biological role, GTP hydrolase that promotes the GTP-dependent binding of aminoacyl-tRNA to the A-site of ribosomes during protein biosynthesis. This Methanospirillum hungatei JF-1 (strain ATCC 27890 / DSM 864 / NBRC 100397 / JF-1) protein is Elongation factor 1-alpha.